A 363-amino-acid polypeptide reads, in one-letter code: Putative glutamate--cysteine ligase 2-3 (363 aa).

It belongs to the glutamate--cysteine ligase type 2 family. YbdK subfamily.

The catalysed reaction is L-cysteine + L-glutamate + ATP = gamma-L-glutamyl-L-cysteine + ADP + phosphate + H(+). ATP-dependent carboxylate-amine ligase which exhibits weak glutamate--cysteine ligase activity. This chain is Putative glutamate--cysteine ligase 2-3, found in Rubrobacter xylanophilus (strain DSM 9941 / JCM 11954 / NBRC 16129 / PRD-1).